A 141-amino-acid chain; its full sequence is MSLERTFSIIKPDAVERNLIGKILARFEQSGFEIVAAKMVRLTKAQAEGFYAEHQGKPFFEDLVEYMVSAPILVSVLQKENAVKDYRTLIGATDPAKAKEGTVRKEFAESLRRNSVHGSDSLESAAREIAYFFIDSEICSR.

ATP contacts are provided by lysine 11, phenylalanine 59, arginine 87, threonine 93, arginine 104, and asparagine 114. Residue histidine 117 is the Pros-phosphohistidine intermediate of the active site.

Belongs to the NDK family. In terms of assembly, homotetramer. It depends on Mg(2+) as a cofactor.

Its subcellular location is the cytoplasm. The catalysed reaction is a 2'-deoxyribonucleoside 5'-diphosphate + ATP = a 2'-deoxyribonucleoside 5'-triphosphate + ADP. It catalyses the reaction a ribonucleoside 5'-diphosphate + ATP = a ribonucleoside 5'-triphosphate + ADP. In terms of biological role, major role in the synthesis of nucleoside triphosphates other than ATP. The ATP gamma phosphate is transferred to the NDP beta phosphate via a ping-pong mechanism, using a phosphorylated active-site intermediate. In Mannheimia succiniciproducens (strain KCTC 0769BP / MBEL55E), this protein is Nucleoside diphosphate kinase.